The chain runs to 75 residues: Small ribosomal subunit protein bS18 (75 aa).

This sequence belongs to the bacterial ribosomal protein bS18 family. As to quaternary structure, part of the 30S ribosomal subunit. Forms a tight heterodimer with protein bS6.

Its function is as follows. Binds as a heterodimer with protein bS6 to the central domain of the 16S rRNA, where it helps stabilize the platform of the 30S subunit. This is Small ribosomal subunit protein bS18 from Legionella pneumophila (strain Paris).